A 381-amino-acid polypeptide reads, in one-letter code: Phthiodiolone/phenolphthiodiolone dimycocerosates ketoreductase (381 aa).

The protein belongs to the mer family. Phthiodiolone/phenolphthiodiolone dimycocerosates ketoreductase subfamily.

Functionally, catalyzes the reduction of the keto moiety of phthiodiolone dimycocerosates (DIM B) and glycosylated phenolphthiodiolone dimycocerosates to form the intermediate compounds phthiotriol and glycosylated phenolphthiotriol dimycocerosates during phthiocerol dimycocerosates (DIM A) and glycosylated phenolphthiocerol dimycocerosates (PGL) biosynthesis. The chain is Phthiodiolone/phenolphthiodiolone dimycocerosates ketoreductase from Mycobacterium bovis (strain ATCC BAA-935 / AF2122/97).